A 184-amino-acid polypeptide reads, in one-letter code: MSRIGKRPIPIPAGVQVELTPDNVVRVTGPKGQLELRLHPKMIVQRENGVVQVQRPSDERFFKQLHGLYRTLIANMVQGVTEGFRKDLEIHGVGYRAALEGKTLVLTVGYSHPVRIDPPPGISFIVESPTRIGVVGIDKQLVGEVAAQIRRVRPPEPYQGKGIRYAGEVIRRKAGKTGKTKGKK.

Belongs to the universal ribosomal protein uL6 family. In terms of assembly, part of the 50S ribosomal subunit.

Functionally, this protein binds to the 23S rRNA, and is important in its secondary structure. It is located near the subunit interface in the base of the L7/L12 stalk, and near the tRNA binding site of the peptidyltransferase center. The polypeptide is Large ribosomal subunit protein uL6 (Thermomicrobium roseum (strain ATCC 27502 / DSM 5159 / P-2)).